Consider the following 94-residue polypeptide: Transcription factor CPC (94 aa).

The tract at residues 1–10 is S1, required for cell-to-cell movements; that stretch reads MFRSDKAEKM. The segment covering 1-11 has biased composition (basic and acidic residues); sequence MFRSDKAEKMD. The disordered stretch occupies residues 1-25; that stretch reads MFRSDKAEKMDKRRRRQSKAKASCS. Residues 30-80 enclose the Myb-like domain; it reads SIEWEAVKMSEEEEDLISRMYKLVGDRWELIAGRIPGRTPEEIERYWLMKH. The tract at residues 76–79 is S2, required for cell-to-cell movements and nuclear localization; the sequence is WLMK.

As to quaternary structure, interacts with GL3 and BHLH2. Interacts with SIEL. Expressed in trichomes and in young developing leaves, as well as in root hair and stele cells (pericycle and vascular tissues). Expressed in epidermal root hairless cells (atrichoblasts) and moves to root hair cells (trichoblasts) by a cell-to-cell movement through plasmodesmata (at protein level).

Its subcellular location is the nucleus. Functionally, transcription factor. Determines the fate of epidermal cell differentiation. Represses trichome development by lateral inhibition. Together with GL3 or BHLH2, promotes the formation of hair developing cells (H position) in root epidermis, probably by inhibiting non-hair cell formation. Represses the expression of GL2 and WER in H cells. Positively regulates stomatal formation in the hypocotyl. This Arabidopsis thaliana (Mouse-ear cress) protein is Transcription factor CPC (CPC).